Consider the following 479-residue polypeptide: Spindly-like protein spdl-1 (479 aa).

3 coiled-coil regions span residues 4 to 180, 210 to 250, and 321 to 357; these read DEEK…EGEL, EEDL…RFNV, and LMKD…KCAH.

Interacts with Zwilch homolog zwl-1, a component of the RZZ complex. Interacts with mdf-1 and mdf-2.

It localises to the chromosome. Its subcellular location is the centromere. The protein localises to the kinetochore. The protein resides in the cytoplasm. It is found in the cytoskeleton. It localises to the spindle pole. Transient kinetochore component required for chromosome and spindle pole alignment and chromosome segregation during mitosis. Functions downstream of the RZZ complex to mediate kinetochore-microtubule attachments and nuclear envelope breakdown during cell division. Required for kinetochore assembly and localizes the checkpoint proteins mdf-1 and mdf-2, dynein and dynactin to unattached kinetochores. Dynein is believed to control the initial lateral interaction between the kinetochore and spindle microtubules and to facilitate the subsequent formation of end-on kinetochore-microtubule attachments mediated by the NDC80 complex. Required for embryonic development. The sequence is that of Spindly-like protein spdl-1 from Caenorhabditis elegans.